The primary structure comprises 361 residues: Mannonate dehydratase 1 (361 aa).

It belongs to the mannonate dehydratase family. Fe(2+) serves as cofactor. Mn(2+) is required as a cofactor.

It carries out the reaction D-mannonate = 2-dehydro-3-deoxy-D-gluconate + H2O. The protein operates within carbohydrate metabolism; pentose and glucuronate interconversion. In terms of biological role, catalyzes the dehydration of D-mannonate. The protein is Mannonate dehydratase 1 (uxuA1) of Halalkalibacterium halodurans (strain ATCC BAA-125 / DSM 18197 / FERM 7344 / JCM 9153 / C-125) (Bacillus halodurans).